We begin with the raw amino-acid sequence, 279 residues long: Large ribosomal subunit protein uL2 (279 aa).

Positions 224 to 279 (AMNPIDHPHGGGEGRTSGGRHPVTPWGKGTKGNRTRKSKASDKLIVRSRHAKKKGR) are disordered. Residues 269-279 (VRSRHAKKKGR) show a composition bias toward basic residues.

Belongs to the universal ribosomal protein uL2 family. In terms of assembly, part of the 50S ribosomal subunit. Forms a bridge to the 30S subunit in the 70S ribosome.

Its function is as follows. One of the primary rRNA binding proteins. Required for association of the 30S and 50S subunits to form the 70S ribosome, for tRNA binding and peptide bond formation. It has been suggested to have peptidyltransferase activity; this is somewhat controversial. Makes several contacts with the 16S rRNA in the 70S ribosome. This Cereibacter sphaeroides (strain ATCC 17025 / ATH 2.4.3) (Rhodobacter sphaeroides) protein is Large ribosomal subunit protein uL2.